Here is a 432-residue protein sequence, read N- to C-terminus: Adenylosuccinate synthetase (432 aa).

GTP-binding positions include 13 to 19 and 41 to 43; these read GDEGKGK and GHT. Aspartate 14 acts as the Proton acceptor in catalysis. Mg(2+) contacts are provided by aspartate 14 and glycine 41. IMP-binding positions include 14–17, 39–42, threonine 130, arginine 144, glutamine 225, threonine 240, and arginine 304; these read DEGK and NAGH. The Proton donor role is filled by histidine 42. Position 300 to 306 (300 to 306) interacts with substrate; sequence ATTGRRR. Residues arginine 306, 332-334, and 414-416 contribute to the GTP site; these read KLD and STG.

The protein belongs to the adenylosuccinate synthetase family. As to quaternary structure, homodimer. Requires Mg(2+) as cofactor.

It is found in the cytoplasm. The enzyme catalyses IMP + L-aspartate + GTP = N(6)-(1,2-dicarboxyethyl)-AMP + GDP + phosphate + 2 H(+). It participates in purine metabolism; AMP biosynthesis via de novo pathway; AMP from IMP: step 1/2. Plays an important role in the de novo pathway of purine nucleotide biosynthesis. Catalyzes the first committed step in the biosynthesis of AMP from IMP. This chain is Adenylosuccinate synthetase, found in Methylococcus capsulatus (strain ATCC 33009 / NCIMB 11132 / Bath).